A 299-amino-acid polypeptide reads, in one-letter code: Oxygen-dependent coproporphyrinogen-III oxidase (299 aa).

Ser-92 contributes to the substrate binding site. The Mn(2+) site is built by His-96 and His-106. His-106 acts as the Proton donor in catalysis. 108-110 (NVR) lines the substrate pocket. 2 residues coordinate Mn(2+): His-145 and His-175. The segment at 240-275 (YVEFNLVWDRGTLFGLQTGGRTESILMSMPPLVRWE) is important for dimerization. A substrate-binding site is contributed by 258 to 260 (GGR).

This sequence belongs to the aerobic coproporphyrinogen-III oxidase family. In terms of assembly, homodimer. The cofactor is Mn(2+).

The protein localises to the cytoplasm. It carries out the reaction coproporphyrinogen III + O2 + 2 H(+) = protoporphyrinogen IX + 2 CO2 + 2 H2O. Its pathway is porphyrin-containing compound metabolism; protoporphyrin-IX biosynthesis; protoporphyrinogen-IX from coproporphyrinogen-III (O2 route): step 1/1. Its function is as follows. Involved in the heme biosynthesis. Catalyzes the aerobic oxidative decarboxylation of propionate groups of rings A and B of coproporphyrinogen-III to yield the vinyl groups in protoporphyrinogen-IX. This is Oxygen-dependent coproporphyrinogen-III oxidase from Escherichia coli O8 (strain IAI1).